We begin with the raw amino-acid sequence, 397 residues long: L-cysteine desulfidase (397 aa).

Residue C23 is the Proton acceptor of the active site. The [4Fe-4S] cluster site is built by C288, C330, and C337.

Belongs to the L-cysteine desulfidase family. Homotrimer. It depends on [4Fe-4S] cluster as a cofactor.

It catalyses the reaction L-cysteine + H2O = hydrogen sulfide + pyruvate + NH4(+) + H(+). Its function is as follows. Catalyzes the cleavage of L-cysteine to form 2-aminoprop-2-enoate and sulfide. The former then spontaneously hydrolyzes to pyruvate and NH(3). May be responsible for the production of sulfide required for the biosynthesis of iron-sulfur centers in this archaea. The sequence is that of L-cysteine desulfidase from Methanococcus maripaludis (strain C7 / ATCC BAA-1331).